The sequence spans 370 residues: MDGVKANQRQQLQLLLVAARHQLSRSDLRSMIQFLENEDCGFDVTLQMADPSEQPELLELHRLVATPALIKLSPTPKQVFAGSSIFQQLQNWITRWQQDIVVTGLGLSLRPTELDGSRTQRELQLEDQLLVLRQENETLIDRLNAQERTLRMVAHELRTPLTAAVLALQSQQLGQINIEHFQDVVKRRLDEIELLSKDLLEVKSTRWEDLFNPQNLDLGNIAAEAILELEKLWLDRNIEIHTDIPSDLPKVFADQRRMRQVLLNLLENALKFTEDGGQVSLSMLHRTSQWVQVSICDNGPGIPEDEQERIFLDRVRLPQTSVTTSGFGVGLSVCRRIVEVHGGKIWVVSEPDKGACFYLTVPVWQRNGQE.

One can recognise a Histidine kinase domain in the interval 152–365 (MVAHELRTPL…CFYLTVPVWQ (214 aa)). Phosphohistidine; by autocatalysis is present on H155.

As to quaternary structure, homooligomerizes. Interacts with KaiC. Participates in the KaiBC complex, whose core is composed of a KaiC homohexamer and 6 KaiB.

It catalyses the reaction ATP + protein L-histidine = ADP + protein N-phospho-L-histidine.. Member of the two-component regulatory system SasA/RpaA involved in genome-wide circadian gene expression. One of several clock output pathways. Participates in the Kai clock protein complex, the main circadian regulator in cyanobacteria, via its interaction with KaiC. KaiC enhances the autophosphorylation activity of SasA, which then transfers its phosphate group to RpaA to activate it. In addition to its output function, recruits fold-shifted KaiB (KaiB(fs)) to KaiC to cooperatively form the KaiB(6):KaiC(6) complex (independent of SasA kinase activity). Required for robustness of the circadian rhythm of gene expression and is involved in clock output, also required for adaptation to light/dark cycles. This is Adaptive-response sensory kinase SasA from Prochlorococcus marinus (strain MIT 9303).